The following is an 867-amino-acid chain: uncharacterized protein (867 aa).

The region spanning 1-294 (MKFSHSLQFN…GSSLRESYMK (294 aa)) is the SPX domain. 2 disordered regions span residues 105 to 152 (QGNN…GQTS) and 165 to 228 (ESTA…NNNR). The segment covering 138-152 (ITSSNREIYLNGQTS) has biased composition (polar residues). Residues 198 to 223 (GNDDEVEEEDDDDDDEDEDEDEDEDN) show a composition bias toward acidic residues. The next 12 membrane-spanning stretches (helical) occupy residues 406-426 (TIAT…FPVI), 434-454 (CLAL…PLFV), 485-505 (VIFS…FTIA), 537-557 (MFVA…VLCF), 576-596 (ILIV…PISS), 616-636 (FAVS…LLSF), 656-676 (FTGV…LWCL), 683-703 (VFGD…GTGL), 712-732 (FLWT…VVSS), 755-775 (VLLI…HIVA), 797-817 (LFVL…TSGF), and 842-862 (AGIP…TPIM).

The protein belongs to the CitM (TC 2.A.11) transporter family.

It localises to the endoplasmic reticulum membrane. This is an uncharacterized protein from Schizosaccharomyces pombe (strain 972 / ATCC 24843) (Fission yeast).